Consider the following 329-residue polypeptide: 7,8-didemethyl-8-hydroxy-5-deazariboflavin synthase (329 aa).

Residues isoleucine 6–asparagine 244 form the Radical SAM core domain. [4Fe-4S] cluster is bound by residues cysteine 20, cysteine 24, and cysteine 27.

It belongs to the radical SAM superfamily. CofG family. In terms of assembly, consists of two subunits, CofG and CofH. The cofactor is [4Fe-4S] cluster.

It catalyses the reaction 5-amino-5-(4-hydroxybenzyl)-6-(D-ribitylimino)-5,6-dihydrouracil + S-adenosyl-L-methionine = 7,8-didemethyl-8-hydroxy-5-deazariboflavin + 5'-deoxyadenosine + L-methionine + NH4(+) + H(+). It functions in the pathway cofactor biosynthesis; coenzyme F0 biosynthesis. Its function is as follows. Catalyzes the radical-mediated synthesis of 7,8-didemethyl-8-hydroxy-5-deazariboflavin from 5-amino-5-(4-hydroxybenzyl)-6-(D-ribitylimino)-5,6-dihydrouracil. This Methanoregula boonei (strain DSM 21154 / JCM 14090 / 6A8) protein is 7,8-didemethyl-8-hydroxy-5-deazariboflavin synthase.